A 467-amino-acid chain; its full sequence is Phosphoglucosamine mutase (467 aa).

Ser-120 functions as the Phosphoserine intermediate in the catalytic mechanism. Mg(2+) is bound by residues Ser-120, Asp-261, Asp-263, and Asp-265. Residue Ser-120 is modified to Phosphoserine.

This sequence belongs to the phosphohexose mutase family. It depends on Mg(2+) as a cofactor. Activated by phosphorylation.

The enzyme catalyses alpha-D-glucosamine 1-phosphate = D-glucosamine 6-phosphate. In terms of biological role, catalyzes the conversion of glucosamine-6-phosphate to glucosamine-1-phosphate. This Parafrankia sp. (strain EAN1pec) protein is Phosphoglucosamine mutase.